Here is a 388-residue protein sequence, read N- to C-terminus: Alcohol dehydrogenase patD (388 aa).

Residue Cys46 participates in Zn(2+) binding. His47 lines the NAD(+) pocket. Residues His67, Glu68, Cys101, Cys104, and Cys112 each coordinate Zn(2+). His67 contacts substrate. Residues 198–203 (VALSRG), 295–297 (SLL), and 320–322 (EEA) each bind NAD(+).

Belongs to the zinc-containing alcohol dehydrogenase family. Zn(2+) serves as cofactor.

It localises to the cytoplasm. The protein resides in the cytosol. It carries out the reaction neopatulin + NADPH + H(+) = (E)-ascladiol + NADP(+). The protein operates within mycotoxin biosynthesis; patulin biosynthesis. Functionally, alcohol dehydrogenase; part of the gene cluster that mediates the biosynthesis of patulin, an acetate-derived tetraketide mycotoxin produced by several fungal species that shows antimicrobial properties against several bacteria. PatD catalyzes the conversion of neopatulin into E-ascladiol. The pathway begins with the synthesis of 6-methylsalicylic acid by the polyketide synthase (PKS) patK via condensation of acetate and malonate units. The 6-methylsalicylic acid decarboxylase patG then catalyzes the decarboxylation of 6-methylsalicylic acid to yield m-cresol (also known as 3-methylphenol). These first reactions occur in the cytosol. The intermediate m-cresol is then transported into the endoplasmic reticulum where the cytochrome P450 monooxygenase patH converts it to m-hydroxybenzyl alcohol, which is further converted to gentisyl alcohol by the cytochrome P450 monooxygenase patI. The oxidoreductases patJ and patO further convert gentisyl alcohol to isoepoxydon in the vacuole. PatN catalyzes then the transformation of isoepoxydon into phyllostine. The cluster protein patF is responsible for the conversion from phyllostine to neopatulin whereas the alcohol dehydrogenase patD converts neopatulin to E-ascladiol. The steps between isoepoxydon and E-ascladiol occur in the cytosol, and E-ascladiol is probably secreted to the extracellular space by one of the cluster-specific transporters patC or patM. Finally, the secreted patulin synthase patE catalyzes the conversion of E-ascladiol to patulin. The chain is Alcohol dehydrogenase patD from Aspergillus clavatus (strain ATCC 1007 / CBS 513.65 / DSM 816 / NCTC 3887 / NRRL 1 / QM 1276 / 107).